Consider the following 375-residue polypeptide: Ubl carboxyl-terminal hydrolase 18 (375 aa).

The disordered stretch occupies residues 18–45 (ESPQSPADLEEKKEEDSNMKREQPRERP). Residues 26-45 (LEEKKEEDSNMKREQPRERP) show a composition bias toward basic and acidic residues. Positions 55 to 373 (VGLHNIGQTC…TAYLLVYMKM (319 aa)) constitute a USP domain. Cys-64 (nucleophile) is an active-site residue. His-321 (proton acceptor) is an active-site residue.

The protein belongs to the peptidase C19 family. In terms of assembly, interacts with STAT2; the interaction is direct. Interacts with IFNAR2; indirectly via STAT2, it negatively regulates the assembly of the ternary interferon-IFNAR1-IFNAR2 complex and inhibits type I interferon signaling. Interacts with STING1. Interacts with USP20.

It carries out the reaction Thiol-dependent hydrolysis of ester, thioester, amide, peptide and isopeptide bonds formed by the C-terminal Gly of ubiquitin (a 76-residue protein attached to proteins as an intracellular targeting signal).. Functionally, interferon-induced ISG15-specific protease that plays a crucial role for maintaining a proper balance of ISG15-conjugated proteins in cells. Regulates protein ISGylation by efficiently cleaving ISG15 conjugates linked via isopeptide bonds. Regulates T-cell activation and T-helper 17 (Th17) cell differentiation by deubiquitinating TAK1, likely to keep TAK1-TAB complexes in steady conditions. In turn, restricts activation of NF-kappa-B, NFAT, and JNK as well as expression of IL2 in T-cells after TCR activation. Acts as a molecular adapter with USP20 to promote innate antiviral response through deubiquitinating STING1. Involved also in the negative regulation of the inflammatory response triggered by type I interferon. Upon recruitment by STAT2 to the type I interferon receptor subunit IFNAR2 interferes with the assembly of the ternary interferon-IFNAR1-IFNAR2 complex and acts as a negative regulator of the type I interferon signaling pathway. The chain is Ubl carboxyl-terminal hydrolase 18 (USP18) from Pongo abelii (Sumatran orangutan).